The following is a 353-amino-acid chain: Stomatin-like protein 2, mitochondrial (353 aa).

Residues 1 to 28 (MLARAARGTGALLLRGSVQASGRIPRRA) constitute a mitochondrion transit peptide. Ser-17 is modified (phosphoserine; by PKC/PRKCZ). Residue Tyr-124 is modified to Phosphotyrosine. At Lys-145 the chain carries N6-acetyllysine; alternate. Lys-145 carries the N6-succinyllysine; alternate modification. Positions 215 to 252 (INVAEGKKQAQILASEAEKAEQINQAAGEASAVLAKAK) form a coiled coil. Position 233 is an N6-acetyllysine (Lys-233). The segment at 324 to 353 (VPGAQNSSEARRDVQTTDTSIEELGRVKLS) is disordered. Position 330 is a phosphoserine (Ser-330).

The protein belongs to the band 7/mec-2 family. As to quaternary structure, forms homooligomers. Interacts with MFN2; may form heterooligomers. Interacts with PHB1 and PHB2; recruits them to cardiolipin-enriched mitochondrial membranes and stabilizes them. Interacts with CACNA2D2.

Its subcellular location is the cell membrane. It is found in the mitochondrion. The protein resides in the mitochondrion inner membrane. The protein localises to the mitochondrion intermembrane space. It localises to the membrane raft. Its subcellular location is the cytoplasm. It is found in the cytoskeleton. In terms of biological role, mitochondrial protein that probably regulates the biogenesis and the activity of mitochondria. Stimulates cardiolipin biosynthesis, binds cardiolipin-enriched membranes where it recruits and stabilizes some proteins including prohibitin and may therefore act in the organization of functional microdomains in mitochondrial membranes. Through regulation of the mitochondrial function may play a role into several biological processes including cell migration, cell proliferation, T-cell activation, calcium homeostasis and cellular response to stress. May play a role in calcium homeostasis through negative regulation of calcium efflux from mitochondria. Required for mitochondrial hyperfusion a pro-survival cellular response to stress which results in increased ATP production by mitochondria. May also regulate the organization of functional domains at the plasma membrane and play a role in T-cell activation through association with the T-cell receptor signaling complex and its regulation. The protein is Stomatin-like protein 2, mitochondrial (Stoml2) of Rattus norvegicus (Rat).